Consider the following 35-residue polypeptide: Augerpeptide hheTx4 (35 aa).

In terms of processing, contains 4 disulfide bonds. In terms of tissue distribution, expressed by the venom duct.

It localises to the secreted. This chain is Augerpeptide hheTx4, found in Hastula hectica (Sea snail).